Consider the following 725-residue polypeptide: N-alpha-acetyltransferase 35, NatC auxiliary subunit (725 aa).

Positions 548–573 (ERIMEEQQKGRSSKKTKKKKKVRPLS) are disordered. The segment covering 558-571 (RSSKKTKKKKKVRP) has biased composition (basic residues).

It belongs to the MAK10 family. Component of the N-terminal acetyltransferase C (NatC) complex, which is composed of NAA35, NAA38 and NAA30. As to expression, expressed in primary spermatocytes, basal epidermis, interstitial fibroblasts of skeletal muscle, and intestinal crypts.

It localises to the cytoplasm. Auxillary component of the N-terminal acetyltransferase C (NatC) complex which catalyzes acetylation of N-terminal methionine residues. N-terminal acetylation protects proteins from ubiquitination and degradation by the N-end rule pathway. Involved in regulation of apoptosis and proliferation of smooth muscle cells. In Rattus norvegicus (Rat), this protein is N-alpha-acetyltransferase 35, NatC auxiliary subunit (Naa35).